A 207-amino-acid polypeptide reads, in one-letter code: Serotype 2 fimbrial subunit (207 aa).

An N-terminal signal peptide occupies residues 1–26; it reads MQIPFQRALRLCLRAALAAIASAAHA. Cys42 and Cys85 are disulfide-bonded.

It belongs to the fimbrial protein family.

It localises to the fimbrium. Its function is as follows. Bordetella pertussis is the causative agent of whooping cough. An essential step in the disease process is the attachment of the bacteria to the ciliated epithelium of the respiratory tract, enabling the organism to resist normal host-clearance mechanisms. It is unclear which bacterial cell surface component are responsible for adherence but the fimbriae of B.pertussis are prime candidates for being involved in this process. The sequence is that of Serotype 2 fimbrial subunit (fim2) from Bordetella pertussis (strain Tohama I / ATCC BAA-589 / NCTC 13251).